A 591-amino-acid polypeptide reads, in one-letter code: Eukaryotic translation initiation factor 3 subunit D (591 aa).

A disordered region spans residues 100–159; sequence SGGNPDEDAAFRLVDGKPPPRPKFGPKWRFNPHHNRNQLPQRRDEEVEAKKRDAEKERAR. Residues 123-135 are compositionally biased toward basic residues; it reads FGPKWRFNPHHNR. The segment covering 140–159 has biased composition (basic and acidic residues); sequence QRRDEEVEAKKRDAEKERAR. The interval 309-323 is RNA gate; that stretch reads QLDLLSVHETSQEPL. Residues 549 to 560 are compositionally biased toward acidic residues; the sequence is DYVEEPLPEDEQ. The interval 549–591 is disordered; sequence DYVEEPLPEDEQVQPTEENTEGAEASVAATKETEEKKADDAQA. A compositionally biased stretch (basic and acidic residues) spans 579-591; the sequence is KETEEKKADDAQA.

Belongs to the eIF-3 subunit D family. Component of the eukaryotic translation initiation factor 3 (eIF-3) complex, which is composed of at least 13 different subunits.

The protein resides in the cytoplasm. MRNA cap-binding component of the eukaryotic translation initiation factor 3 (eIF-3) complex, which is involved in protein synthesis of a specialized repertoire of mRNAs and, together with other initiation factors, stimulates binding of mRNA and methionyl-tRNAi to the 40S ribosome. The eIF-3 complex specifically targets and initiates translation of a subset of mRNAs involved in cell proliferation. In the eIF-3 complex, eif3d specifically recognizes and binds the 7-methylguanosine cap of a subset of mRNAs. This is Eukaryotic translation initiation factor 3 subunit D (TIF3D1) from Arabidopsis thaliana (Mouse-ear cress).